We begin with the raw amino-acid sequence, 432 residues long: Adenylosuccinate synthetase (432 aa).

Residues 13–19 (GDEGKGK) and 41–43 (GHT) contribute to the GTP site. D14 (proton acceptor) is an active-site residue. Residues D14 and G41 each coordinate Mg(2+). Residues 14–17 (DEGK), 39–42 (NAGH), T130, R144, Q225, T240, and R304 contribute to the IMP site. Residue H42 is the Proton donor of the active site. 300-306 (ATTGRRR) contacts substrate. Residues R306, 332 to 334 (KLD), and 415 to 417 (STG) contribute to the GTP site.

This sequence belongs to the adenylosuccinate synthetase family. In terms of assembly, homodimer. The cofactor is Mg(2+).

Its subcellular location is the cytoplasm. The catalysed reaction is IMP + L-aspartate + GTP = N(6)-(1,2-dicarboxyethyl)-AMP + GDP + phosphate + 2 H(+). The protein operates within purine metabolism; AMP biosynthesis via de novo pathway; AMP from IMP: step 1/2. Its function is as follows. Plays an important role in the de novo pathway of purine nucleotide biosynthesis. Catalyzes the first committed step in the biosynthesis of AMP from IMP. This chain is Adenylosuccinate synthetase, found in Shigella flexneri serotype 5b (strain 8401).